Consider the following 64-residue polypeptide: Large ribosomal subunit protein bL35 (64 aa).

It belongs to the bacterial ribosomal protein bL35 family.

The protein is Large ribosomal subunit protein bL35 of Pseudomonas savastanoi pv. phaseolicola (strain 1448A / Race 6) (Pseudomonas syringae pv. phaseolicola (strain 1448A / Race 6)).